Here is a 370-residue protein sequence, read N- to C-terminus: Cobalt-precorrin-5B C(1)-methyltransferase (370 aa).

The protein belongs to the CbiD family.

The catalysed reaction is Co-precorrin-5B + S-adenosyl-L-methionine = Co-precorrin-6A + S-adenosyl-L-homocysteine. The protein operates within cofactor biosynthesis; adenosylcobalamin biosynthesis; cob(II)yrinate a,c-diamide from sirohydrochlorin (anaerobic route): step 6/10. Catalyzes the methylation of C-1 in cobalt-precorrin-5B to form cobalt-precorrin-6A. The protein is Cobalt-precorrin-5B C(1)-methyltransferase of Pseudomonas savastanoi pv. phaseolicola (strain 1448A / Race 6) (Pseudomonas syringae pv. phaseolicola (strain 1448A / Race 6)).